The primary structure comprises 86 residues: Acyl carrier protein (86 aa).

The region spanning 10-85 is the Carrier domain; that stretch reads DKIEQKVIEM…DVIQYIKERQ (76 aa). Residue Ser45 is modified to O-(pantetheine 4'-phosphoryl)serine.

This sequence belongs to the acyl carrier protein (ACP) family. In terms of processing, 4'-phosphopantetheine is transferred from CoA to a specific serine of apo-ACP by AcpS. This modification is essential for activity because fatty acids are bound in thioester linkage to the sulfhydryl of the prosthetic group.

It is found in the cytoplasm. Its pathway is lipid metabolism; fatty acid biosynthesis. Functionally, carrier of the growing fatty acid chain in fatty acid biosynthesis. The polypeptide is Acyl carrier protein (Rickettsia canadensis (strain McKiel)).